We begin with the raw amino-acid sequence, 230 residues long: Ribonuclease 3 (230 aa).

The 121-residue stretch at 5–125 (YSRFYNILGY…VIGAIYLDSD (121 aa)) folds into the RNase III domain. Glu-40 lines the Mg(2+) pocket. Asp-44 is an active-site residue. Mg(2+) contacts are provided by Asp-111 and Glu-114. Glu-114 is an active-site residue. Residues 153-223 (DSKSKLQEIL…AEKMIEMLSQ (71 aa)) form the DRBM domain.

Belongs to the ribonuclease III family. In terms of assembly, homodimer. Mg(2+) is required as a cofactor.

It is found in the cytoplasm. The catalysed reaction is Endonucleolytic cleavage to 5'-phosphomonoester.. Functionally, digests double-stranded RNA. Involved in the processing of primary rRNA transcript to yield the immediate precursors to the large and small rRNAs (23S and 16S). Processes some mRNAs, and tRNAs when they are encoded in the rRNA operon. Processes pre-crRNA and tracrRNA of type II CRISPR loci if present in the organism. The protein is Ribonuclease 3 of Francisella tularensis subsp. holarctica (strain FTNF002-00 / FTA).